The sequence spans 364 residues: Dihydroorotate dehydrogenase (quinone) (364 aa).

FMN is bound by residues 62–66 and T86; that span reads AGFDK. K66 serves as a coordination point for substrate. 111–115 contributes to the substrate binding site; sequence NRMGF. Residues N142 and N175 each contribute to the FMN site. N175 serves as a coordination point for substrate. The active-site Nucleophile is S178. A substrate-binding site is contributed by N180. FMN contacts are provided by K216 and T244. A substrate-binding site is contributed by 245–246; that stretch reads NT. Residues G267, G296, and 317 to 318 each bind FMN; that span reads YT.

This sequence belongs to the dihydroorotate dehydrogenase family. Type 2 subfamily. Monomer. Requires FMN as cofactor.

It is found in the cell membrane. It carries out the reaction (S)-dihydroorotate + a quinone = orotate + a quinol. It functions in the pathway pyrimidine metabolism; UMP biosynthesis via de novo pathway; orotate from (S)-dihydroorotate (quinone route): step 1/1. Its function is as follows. Catalyzes the conversion of dihydroorotate to orotate with quinone as electron acceptor. In Anaeromyxobacter dehalogenans (strain 2CP-1 / ATCC BAA-258), this protein is Dihydroorotate dehydrogenase (quinone).